We begin with the raw amino-acid sequence, 919 residues long: Eukaryotic translation initiation factor 3 subunit C (919 aa).

The segment at 1–28 is disordered; sequence MSRFFANGSDSESESSEEEVQAPNFNKA. Over residues 11 to 20 the composition is skewed to acidic residues; it reads SESESSEEEV. Ser34, Ser165, and Ser177 each carry phosphoserine. The tract at residues 154-275 is disordered; the sequence is LSRFRENPQE…EQKIKLRKRA (122 aa). A compositionally biased stretch (acidic residues) spans 162 to 171; the sequence is QEESENEDEE. The span at 210 to 236 shows a compositional bias: acidic residues; that stretch reads ADDEDSDESIDWDPDTESETESSEDEN. Positions 241-269 are enriched in basic and acidic residues; that stretch reads MRERFLKRSTEKDDKDDDKRKDKRKEQKI. The PCI domain occupies 640–816; that stretch reads FHMHINLELL…ETVVMHRSEP (177 aa). The disordered stretch occupies residues 848–919; that stretch reads FFQRGNMGNR…QQQVQTIDEE (72 aa). Over residues 883–894 the composition is skewed to basic residues; it reads QRNRNQRGHHKN. Low complexity predominate over residues 895-919; it reads QQNQNQQQQQQHQREQQQVQTIDEE.

It belongs to the eIF-3 subunit C family. Component of the eukaryotic translation initiation factor 3 (eIF-3) complex. The eIF-3 complex interacts with pix.

It is found in the cytoplasm. Its function is as follows. Component of the eukaryotic translation initiation factor 3 (eIF-3) complex, which is involved in protein synthesis of a specialized repertoire of mRNAs and, together with other initiation factors, stimulates binding of mRNA and methionyl-tRNAi to the 40S ribosome. The eIF-3 complex specifically targets and initiates translation of a subset of mRNAs involved in cell proliferation. This is Eukaryotic translation initiation factor 3 subunit C from Drosophila willistoni (Fruit fly).